The sequence spans 158 residues: Cyclic pyranopterin monophosphate synthase (158 aa).

Substrate is bound by residues 74–76 (MCH) and 112–113 (ME). Asp-127 is an active-site residue.

The protein belongs to the MoaC family. As to quaternary structure, homohexamer; trimer of dimers.

The catalysed reaction is (8S)-3',8-cyclo-7,8-dihydroguanosine 5'-triphosphate = cyclic pyranopterin phosphate + diphosphate. Its pathway is cofactor biosynthesis; molybdopterin biosynthesis. In terms of biological role, catalyzes the conversion of (8S)-3',8-cyclo-7,8-dihydroguanosine 5'-triphosphate to cyclic pyranopterin monophosphate (cPMP). The polypeptide is Cyclic pyranopterin monophosphate synthase (Helicobacter pylori (strain P12)).